Consider the following 310-residue polypeptide: tRNA-cytidine(32) 2-sulfurtransferase (310 aa).

The PP-loop motif signature appears at serine 45–serine 50. Positions 120, 123, and 211 each coordinate [4Fe-4S] cluster.

Belongs to the TtcA family. As to quaternary structure, homodimer. Mg(2+) serves as cofactor. The cofactor is [4Fe-4S] cluster.

Its subcellular location is the cytoplasm. The enzyme catalyses cytidine(32) in tRNA + S-sulfanyl-L-cysteinyl-[cysteine desulfurase] + AH2 + ATP = 2-thiocytidine(32) in tRNA + L-cysteinyl-[cysteine desulfurase] + A + AMP + diphosphate + H(+). The protein operates within tRNA modification. In terms of biological role, catalyzes the ATP-dependent 2-thiolation of cytidine in position 32 of tRNA, to form 2-thiocytidine (s(2)C32). The sulfur atoms are provided by the cysteine/cysteine desulfurase (IscS) system. The polypeptide is tRNA-cytidine(32) 2-sulfurtransferase (Shewanella oneidensis (strain ATCC 700550 / JCM 31522 / CIP 106686 / LMG 19005 / NCIMB 14063 / MR-1)).